A 56-amino-acid chain; its full sequence is Attractin (56 aa).

3 disulfides stabilise this stretch: Cys4-Cys41, Cys13-Cys33, and Cys20-Cys26.

In terms of tissue distribution, produced by the albumen gland of the egg cordons.

Its subcellular location is the secreted. In terms of biological role, water-borne pheromone that attract the marine mollusk Aplysia into breeding aggregations and coordinate male and female reproductive behavior within the aggregation. The sequence is that of Attractin (ATT) from Aplysia vaccaria (California black sea hare).